We begin with the raw amino-acid sequence, 109 residues long: Nucleoid-associated protein A1S_1684 (109 aa).

Belongs to the YbaB/EbfC family. Homodimer.

Its subcellular location is the cytoplasm. The protein localises to the nucleoid. Functionally, binds to DNA and alters its conformation. May be involved in regulation of gene expression, nucleoid organization and DNA protection. The chain is Nucleoid-associated protein A1S_1684 from Acinetobacter baumannii (strain ATCC 17978 / DSM 105126 / CIP 53.77 / LMG 1025 / NCDC KC755 / 5377).